A 170-amino-acid polypeptide reads, in one-letter code: MKMIMITMVVFMNHNYNIQITLLENKKFNIDNGLLYVNVNEENTWQKIENNTVLAYEIILLKIVDDDYKKTFYLFLKNTHISVLNNIVKIQALNDLHFFIKDGLNKKNNHKKELVDKYKNITNNILELEAKQQLGLTLSEFLDLDNLKQEQYITNMQIRLNLVEYKKDEK.

This is an uncharacterized protein from Ureaplasma parvum serovar 3 (strain ATCC 700970).